The sequence spans 564 residues: Phenylalanine--tRNA ligase beta subunit (564 aa).

A B5 domain is found at Y286–S362. Residues D340, D346, E349, and E350 each contribute to the Mg(2+) site.

Belongs to the phenylalanyl-tRNA synthetase beta subunit family. Type 2 subfamily. In terms of assembly, tetramer of two alpha and two beta subunits. Requires Mg(2+) as cofactor.

It is found in the cytoplasm. It carries out the reaction tRNA(Phe) + L-phenylalanine + ATP = L-phenylalanyl-tRNA(Phe) + AMP + diphosphate + H(+). The protein is Phenylalanine--tRNA ligase beta subunit of Borrelia duttonii (strain Ly).